A 262-amino-acid polypeptide reads, in one-letter code: Flap endonuclease Xni (262 aa).

Residue Asp-105 coordinates Mg(2+). Residues 162–257 enclose the 5'-3' exonuclease domain; sequence ERSQFLDLMA…FRVIDSPPEK (96 aa). Residues Leu-172, Ala-173, Pro-181, Ile-183, and Ile-186 each contribute to the K(+) site. The interval 185 to 190 is interaction with DNA; that stretch reads GIGPKS.

Belongs to the Xni family. Requires Mg(2+) as cofactor. The cofactor is K(+).

In terms of biological role, has flap endonuclease activity. During DNA replication, flap endonucleases cleave the 5'-overhanging flap structure that is generated by displacement synthesis when DNA polymerase encounters the 5'-end of a downstream Okazaki fragment. The protein is Flap endonuclease Xni of Shewanella baltica (strain OS223).